A 562-amino-acid chain; its full sequence is Phosphoacetylglucosamine mutase (562 aa).

The active-site Phosphoserine intermediate is the S74. Positions 74, 291, 293, and 295 each coordinate Mg(2+). Substrate is bound by residues E395–N397, R526–T530, and R535.

It belongs to the phosphohexose mutase family. Requires Mg(2+) as cofactor.

The catalysed reaction is N-acetyl-alpha-D-glucosamine 1-phosphate = N-acetyl-D-glucosamine 6-phosphate. The protein operates within nucleotide-sugar biosynthesis; UDP-N-acetyl-alpha-D-glucosamine biosynthesis; N-acetyl-alpha-D-glucosamine 1-phosphate from alpha-D-glucosamine 6-phosphate (route I): step 2/2. Interconverts GlcNAc-6-P and GlcNAc-1-P. This is Phosphoacetylglucosamine mutase from Oryza sativa subsp. japonica (Rice).